Consider the following 333-residue polypeptide: Tetraacyldisaccharide 4'-kinase (333 aa).

55-62 (TAGGNGKT) lines the ATP pocket.

It belongs to the LpxK family.

The catalysed reaction is a lipid A disaccharide + ATP = a lipid IVA + ADP + H(+). The protein operates within glycolipid biosynthesis; lipid IV(A) biosynthesis; lipid IV(A) from (3R)-3-hydroxytetradecanoyl-[acyl-carrier-protein] and UDP-N-acetyl-alpha-D-glucosamine: step 6/6. Its function is as follows. Transfers the gamma-phosphate of ATP to the 4'-position of a tetraacyldisaccharide 1-phosphate intermediate (termed DS-1-P) to form tetraacyldisaccharide 1,4'-bis-phosphate (lipid IVA). In Proteus mirabilis (strain HI4320), this protein is Tetraacyldisaccharide 4'-kinase.